A 41-amino-acid polypeptide reads, in one-letter code: U3-theraphotoxin-Hs1a (41 aa).

3 cysteine pairs are disulfide-bonded: Cys2–Cys16, Cys9–Cys37, and Cys17–Cys40.

Belongs to the neurotoxin 14 (magi-1) family. 01 (HNTX-16) subfamily. In terms of tissue distribution, expressed by the venom gland.

The protein resides in the secreted. Functionally, intracerebroventricular injection paralyzes mice. Has no effect on voltage-gated sodium currents. This Cyriopagopus schmidti (Chinese bird spider) protein is U3-theraphotoxin-Hs1a.